We begin with the raw amino-acid sequence, 127 residues long: Protein LLP homolog (127 aa).

Basic residues predominate over residues 1-21 (MAKSLRSKWKRKMRAEKRKKN). The interval 1 to 24 (MAKSLRSKWKRKMRAEKRKKNAPK) is disordered. Residues Lys65 and Lys72 each participate in a glycyl lysine isopeptide (Lys-Gly) (interchain with G-Cter in SUMO2) cross-link. Positions 98–120 (RQRKRLKAKRERKKGKSKVKAMK) are enriched in basic residues. A disordered region spans residues 98-127 (RQRKRLKAKRERKKGKSKVKAMKAAKGLTW).

Belongs to the learning-associated protein family. Interacts with CTCF, MYO1C and with the transcriptional machinery, including RNA polymerase II and TBP.

Its subcellular location is the nucleus. The protein localises to the nucleolus. The protein resides in the chromosome. In terms of biological role, in hippocampal neurons, regulates dendritic and spine growth and synaptic transmission. This Bos taurus (Bovine) protein is Protein LLP homolog (LLPH).